The sequence spans 152 residues: MTLTFPAPSKDKAELETGPAFTPRFDEKGLVTAVVTDARDGELLMVAHMNAEALALTIETGIAHYYSRSRNSLWKKGESSGNTQAVQEIRTDCDQDAIWLKVTVAGHDATCHTGRRSCFYRTVGVENGKARVTITDEHRHFDPAQIYAEKKG.

D92 is a Mg(2+) binding site. C93 provides a ligand contact to Zn(2+). Mg(2+) is bound by residues D94 and D96. Residues C111 and C118 each contribute to the Zn(2+) site.

Belongs to the PRA-CH family. In terms of assembly, homodimer. It depends on Mg(2+) as a cofactor. The cofactor is Zn(2+).

The protein localises to the cytoplasm. It catalyses the reaction 1-(5-phospho-beta-D-ribosyl)-5'-AMP + H2O = 1-(5-phospho-beta-D-ribosyl)-5-[(5-phospho-beta-D-ribosylamino)methylideneamino]imidazole-4-carboxamide. The protein operates within amino-acid biosynthesis; L-histidine biosynthesis; L-histidine from 5-phospho-alpha-D-ribose 1-diphosphate: step 3/9. Its function is as follows. Catalyzes the hydrolysis of the adenine ring of phosphoribosyl-AMP. The chain is Phosphoribosyl-AMP cyclohydrolase from Sinorhizobium fredii (strain NBRC 101917 / NGR234).